An 895-amino-acid chain; its full sequence is Protein translocase subunit SecA (895 aa).

ATP-binding positions include Gln90, 108–112 (GEGKS), and Asp498.

It belongs to the SecA family.

It is found in the plastid. The protein localises to the chloroplast stroma. It localises to the chloroplast thylakoid membrane. It catalyses the reaction ATP + H2O + cellular proteinSide 1 = ADP + phosphate + cellular proteinSide 2.. Functionally, has a central role in coupling the hydrolysis of ATP to the transfer of proteins across the thylakoid membrane. The polypeptide is Protein translocase subunit SecA (Cyanidium caldarium (Red alga)).